The sequence spans 359 residues: HTH-type transcriptional regulator Rv3575c (359 aa).

Positions 9-64 constitute an HTH lacI-type domain; that stretch reads ATLASLAAELKVSRTTVSNAFNRPDQLSADLRERVLATAKRLGYAGPDPVARSLRT. Residues 11-30 constitute a DNA-binding region (H-T-H motif); the sequence is LASLAAELKVSRTTVSNAFN.

Functionally, transcriptional regulator that negatively regulates transcription of the mce4 operon, which is involved in cholesterol transport and utilization. Acts by binding to the promoter region of the mce4 operon. It affects the utilization of host cholesterol as a carbon source, impacting the host's innate immune response. The sequence is that of HTH-type transcriptional regulator Rv3575c from Mycobacterium tuberculosis (strain ATCC 25618 / H37Rv).